A 314-amino-acid polypeptide reads, in one-letter code: Protoheme IX farnesyltransferase (314 aa).

The next 8 helical transmembrane spans lie at 30-50 (VMSL…VSVH), 51-71 (PVIG…SGAL), 122-142 (FLAA…YSMW), 151-171 (IVIG…IATG), 178-198 (WLMF…LALF), 224-244 (IIAY…SAIG), 247-267 (VYLA…IDIW), and 285-305 (FFRL…LESA).

Belongs to the UbiA prenyltransferase family. Protoheme IX farnesyltransferase subfamily. In terms of assembly, interacts with CtaA.

It is found in the cell inner membrane. The enzyme catalyses heme b + (2E,6E)-farnesyl diphosphate + H2O = Fe(II)-heme o + diphosphate. The protein operates within porphyrin-containing compound metabolism; heme O biosynthesis; heme O from protoheme: step 1/1. In terms of biological role, converts heme B (protoheme IX) to heme O by substitution of the vinyl group on carbon 2 of heme B porphyrin ring with a hydroxyethyl farnesyl side group. The protein is Protoheme IX farnesyltransferase of Roseobacter denitrificans (strain ATCC 33942 / OCh 114) (Erythrobacter sp. (strain OCh 114)).